A 350-amino-acid polypeptide reads, in one-letter code: Phenylalanine--tRNA ligase alpha subunit (350 aa).

Glu-260 contacts Mg(2+).

The protein belongs to the class-II aminoacyl-tRNA synthetase family. Phe-tRNA synthetase alpha subunit type 1 subfamily. Tetramer of two alpha and two beta subunits. Requires Mg(2+) as cofactor.

Its subcellular location is the cytoplasm. The catalysed reaction is tRNA(Phe) + L-phenylalanine + ATP = L-phenylalanyl-tRNA(Phe) + AMP + diphosphate + H(+). This Mycoplasma capricolum subsp. capricolum (strain California kid / ATCC 27343 / NCTC 10154) protein is Phenylalanine--tRNA ligase alpha subunit.